A 93-amino-acid polypeptide reads, in one-letter code: uncharacterized protein (93 aa).

A helical transmembrane segment spans residues 68–88 (WLVTVVLANGVVSLFLLGGLI).

The protein localises to the membrane. This is an uncharacterized protein from Mycoplasma pneumoniae (strain ATCC 29342 / M129 / Subtype 1) (Mycoplasmoides pneumoniae).